A 1345-amino-acid polypeptide reads, in one-letter code: DNA-directed RNA polymerase subunit beta' (1345 aa).

Zn(2+) is bound by residues Cys-60, Cys-62, Cys-75, and Cys-78. Mg(2+)-binding residues include Asp-536, Asp-538, and Asp-540. Cys-895, Cys-974, Cys-981, and Cys-984 together coordinate Zn(2+).

This sequence belongs to the RNA polymerase beta' chain family. As to quaternary structure, the RNAP catalytic core consists of 2 alpha, 1 beta, 1 beta' and 1 omega subunit. When a sigma factor is associated with the core the holoenzyme is formed, which can initiate transcription. Mg(2+) is required as a cofactor. It depends on Zn(2+) as a cofactor.

The enzyme catalyses RNA(n) + a ribonucleoside 5'-triphosphate = RNA(n+1) + diphosphate. Its function is as follows. DNA-dependent RNA polymerase catalyzes the transcription of DNA into RNA using the four ribonucleoside triphosphates as substrates. This Bifidobacterium longum (strain DJO10A) protein is DNA-directed RNA polymerase subunit beta'.